A 193-amino-acid polypeptide reads, in one-letter code: MPEIRQLSEGIFEVTKDKKQLSTLNLDPGKVVYGEKLISVEGDEYRTWDPRRSKLGAMVLKKFDIPLKRNSKVLYLGAASGTTVSHVSDIVSEGAVYSVEFAPRSMRDFIGLASRRKNIFPILADAGKPDSYAHIVEPVDVIFQDVAQPNQAEIAARNAVRFLKKDGYLLLSIKARSIDTAASPKEIFKEEVK.

S-adenosyl-L-methionine contacts are provided by residues 82-83, 100-101, 125-126, and 145-148; these read TT, EF, DA, and DVAQ.

The protein belongs to the methyltransferase superfamily. Fibrillarin family. As to quaternary structure, interacts with nop5. Component of box C/D small ribonucleoprotein (sRNP) particles that contain rpl7ae, FlpA and nop5, plus a guide RNA.

In terms of biological role, involved in pre-rRNA and tRNA processing. Utilizes the methyl donor S-adenosyl-L-methionine to catalyze the site-specific 2'-hydroxyl methylation of ribose moieties in rRNA and tRNA. Site specificity is provided by a guide RNA that base pairs with the substrate. Methylation occurs at a characteristic distance from the sequence involved in base pairing with the guide RNA. This is Fibrillarin-like rRNA/tRNA 2'-O-methyltransferase from Methanosarcina mazei (Methanosarcina frisia).